Here is an 820-residue protein sequence, read N- to C-terminus: Protein O-mannosyl-transferase 2 (820 aa).

The chain crosses the membrane as a helical span at residues 124–144 (AAGWWATLAVVTLLSFATRFH). Asn-168 is a glycosylation site (N-linked (GlcNAc...) asparagine). A run of 5 helical transmembrane segments spans residues 170–190 (TFFFDVHPPLGKMLIGLAGYL), 216–236 (GFCAFLGSWLIPFAYLTVLDL), 261–281 (QYILLDPILMFFIMAAMLSMV), 301–321 (LTGISLAGALGVKFVGLFIIV), and 353–373 (ILCLIVLPLVLYVTIFAVHVM). Asn-376 and Asn-400 each carry an N-linked (GlcNAc...) asparagine glycan. 3 consecutive MIR domains span residues 404–460 (PEHL…IKKY), 473–529 (VEFV…IEVV), and 534–591 (GNRI…IEEH). N-linked (GlcNAc...) asparagine glycosylation is present at Asn-515. 2 N-linked (GlcNAc...) asparagine glycosylation sites follow: Asn-598 and Asn-653. 4 consecutive transmembrane segments (helical) span residues 659–679 (VYLLGNPVVWWLNLVSIVLYL), 713–733 (LLLGWMLHYFPFFLMGRILYF), 735–755 (HYFPAMLFSSMLTGILWDTLL), and 774–794 (VGILSLLLTTAYSFYLFHPLA).

Belongs to the glycosyltransferase 39 family. N-glycosylated. In terms of tissue distribution, ubiquitous. Highly expressed in the acrosome of cap phase spermatids, in spermatocytes and liver. Isoform 1 seems to be testis-specific.

The protein localises to the endoplasmic reticulum membrane. The enzyme catalyses a di-trans,poly-cis-dolichyl beta-D-mannosyl phosphate + L-seryl-[protein] = 3-O-(alpha-D-mannosyl)-L-seryl-[protein] + a di-trans,poly-cis-dolichyl phosphate + H(+). It catalyses the reaction a di-trans,poly-cis-dolichyl beta-D-mannosyl phosphate + L-threonyl-[protein] = 3-O-(alpha-D-mannosyl)-L-threonyl-[protein] + a di-trans,poly-cis-dolichyl phosphate + H(+). The protein operates within protein modification; protein glycosylation. Its function is as follows. Transfers mannosyl residues to the hydroxyl group of serine or threonine residues. Coexpression of both POMT1 and POMT2 is necessary for enzyme activity, expression of either POMT1 or POMT2 alone is insufficient. Essentially dedicated to O-mannosylation of alpha-DAG1 and few other proteins but not of cadherins and protocaherins. The chain is Protein O-mannosyl-transferase 2 (Pomt2) from Mus musculus (Mouse).